Reading from the N-terminus, the 113-residue chain is C-C motif chemokine 15 (113 aa).

Positions 1 to 21 (MKVSVAALSCLMLVAVLGSQA) are cleaved as a signal peptide. 3 disulfides stabilise this stretch: C53/C77, C54/C93, and C64/C104.

This sequence belongs to the intercrine beta (chemokine CC) family. As to quaternary structure, monomer. In terms of processing, the N-terminal is proteolytically cleaved by proteases associated with inflammatory responses. The processed forms CCL15(22-92), CCL15(25-92) and CCL15(29-92) exhibit increase in CCR1-mediated signaling and chemotaxis assays in vitro. As to expression, most abundant in heart, skeletal muscle and adrenal gland. Lower levels in placenta, liver, pancreas and bone marrow. CCL15(22-92), CCL15(25-92) and CCL15(29-92) are found in high levels in synovial fluids from rheumatoid patients.

It localises to the secreted. Functionally, chemotactic factor that attracts T-cells and monocytes, but not neutrophils, eosinophils, or B-cells. Acts mainly via CC chemokine receptor CCR1. Also binds to CCR3. CCL15(22-92), CCL15(25-92) and CCL15(29-92) are more potent chemoattractants than the CCL15. In Homo sapiens (Human), this protein is C-C motif chemokine 15 (CCL15).